A 647-amino-acid chain; its full sequence is Protein FAM161A (647 aa).

2 disordered regions span residues 32–55 and 143–175; these read RELG…TSME and PAQH…GDSE. The segment covering 152 to 161 has biased composition (polar residues); that stretch reads SRSVSPSLAE. 2 coiled-coil regions span residues 243-268 and 518-544; these read IKSK…ECQK and AIRK…VLNK. 2 disordered regions span residues 504–524 and 588–647; these read QTPR…KREK and DEHV…IEEI. Basic and acidic residues-rich tracts occupy residues 510-524 and 588-600; these read ESSK…KREK and DEHV…KKIP. Acidic residues predominate over residues 613 to 638; the sequence is DLLDDEEDDKYDCESEEAEEEDAYST.

Belongs to the FAM161 family.

The protein localises to the cytoplasm. The protein resides in the cytoskeleton. It is found in the cilium basal body. Its subcellular location is the cell projection. It localises to the cilium. The protein localises to the microtubule organizing center. The protein resides in the centrosome. It is found in the centriole. Its function is as follows. Involved in ciliogenesis. This Xenopus laevis (African clawed frog) protein is Protein FAM161A (fam161a).